Consider the following 557-residue polypeptide: DNA mismatch repair protein MutL (557 aa).

It belongs to the DNA mismatch repair MutL/HexB family.

In terms of biological role, this protein is involved in the repair of mismatches in DNA. It is required for dam-dependent methyl-directed DNA mismatch repair. May act as a 'molecular matchmaker', a protein that promotes the formation of a stable complex between two or more DNA-binding proteins in an ATP-dependent manner without itself being part of a final effector complex. The chain is DNA mismatch repair protein MutL from Methanothrix thermoacetophila (strain DSM 6194 / JCM 14653 / NBRC 101360 / PT) (Methanosaeta thermophila).